The chain runs to 266 residues: Methionine aminopeptidase (266 aa).

His80 lines the substrate pocket. Residues Asp98, Asp109, and His172 each coordinate a divalent metal cation. His179 contacts substrate. A divalent metal cation contacts are provided by Glu206 and Glu237.

The protein belongs to the peptidase M24A family. Methionine aminopeptidase type 1 subfamily. As to quaternary structure, monomer. Co(2+) is required as a cofactor. Requires Zn(2+) as cofactor. The cofactor is Mn(2+). Fe(2+) serves as cofactor.

The catalysed reaction is Release of N-terminal amino acids, preferentially methionine, from peptides and arylamides.. Its function is as follows. Removes the N-terminal methionine from nascent proteins. The N-terminal methionine is often cleaved when the second residue in the primary sequence is small and uncharged (Met-Ala-, Cys, Gly, Pro, Ser, Thr, or Val). Requires deformylation of the N(alpha)-formylated initiator methionine before it can be hydrolyzed. The sequence is that of Methionine aminopeptidase from Buchnera aphidicola subsp. Baizongia pistaciae (strain Bp).